The sequence spans 302 residues: Acetylglutamate kinase (302 aa).

Substrate is bound by residues 68–69, Arg-90, and Asn-195; that span reads GG.

The protein belongs to the acetylglutamate kinase family. ArgB subfamily.

The protein localises to the cytoplasm. The catalysed reaction is N-acetyl-L-glutamate + ATP = N-acetyl-L-glutamyl 5-phosphate + ADP. The protein operates within amino-acid biosynthesis; L-arginine biosynthesis; N(2)-acetyl-L-ornithine from L-glutamate: step 2/4. Catalyzes the ATP-dependent phosphorylation of N-acetyl-L-glutamate. The sequence is that of Acetylglutamate kinase from Marinomonas sp. (strain MWYL1).